The following is a 206-amino-acid chain: Pyridoxine/pyridoxamine 5'-phosphate oxidase (206 aa).

FMN contacts are provided by residues 55–60, 70–71, Arg-76, Lys-77, and Gln-99; these read RVVLLK and YT. Substrate is bound at residue Lys-60. Residues Tyr-117, Arg-121, and Ser-125 each contribute to the substrate site. FMN is bound by residues 134-135 and Trp-179; that span reads QS. 185-187 provides a ligand contact to substrate; it reads RLH. Arg-189 provides a ligand contact to FMN.

It belongs to the pyridoxamine 5'-phosphate oxidase family. Homodimer. Requires FMN as cofactor.

It catalyses the reaction pyridoxamine 5'-phosphate + O2 + H2O = pyridoxal 5'-phosphate + H2O2 + NH4(+). It carries out the reaction pyridoxine 5'-phosphate + O2 = pyridoxal 5'-phosphate + H2O2. It participates in cofactor metabolism; pyridoxal 5'-phosphate salvage; pyridoxal 5'-phosphate from pyridoxamine 5'-phosphate: step 1/1. Its pathway is cofactor metabolism; pyridoxal 5'-phosphate salvage; pyridoxal 5'-phosphate from pyridoxine 5'-phosphate: step 1/1. Functionally, catalyzes the oxidation of either pyridoxine 5'-phosphate (PNP) or pyridoxamine 5'-phosphate (PMP) into pyridoxal 5'-phosphate (PLP). In Myxococcus xanthus (strain DK1622), this protein is Pyridoxine/pyridoxamine 5'-phosphate oxidase.